Here is a 163-residue protein sequence, read N- to C-terminus: Phosphopantetheine adenylyltransferase (163 aa).

Threonine 9 is a substrate binding site. ATP contacts are provided by residues 9 to 10 (TF) and histidine 17. 3 residues coordinate substrate: lysine 41, threonine 73, and arginine 87. ATP-binding positions include 88–90 (GLR), glutamate 98, and 123–129 (FSFISSS).

The protein belongs to the bacterial CoaD family. In terms of assembly, homohexamer. It depends on Mg(2+) as a cofactor.

Its subcellular location is the cytoplasm. The catalysed reaction is (R)-4'-phosphopantetheine + ATP + H(+) = 3'-dephospho-CoA + diphosphate. Its pathway is cofactor biosynthesis; coenzyme A biosynthesis; CoA from (R)-pantothenate: step 4/5. Functionally, reversibly transfers an adenylyl group from ATP to 4'-phosphopantetheine, yielding dephospho-CoA (dPCoA) and pyrophosphate. The polypeptide is Phosphopantetheine adenylyltransferase (Desulfitobacterium hafniense (strain Y51)).